A 452-amino-acid chain; its full sequence is cAMP-dependent protein kinase regulatory subunit (452 aa).

The tract at residues 28–212 (QFCANYFNSK…ELSKTLGSNF (185 aa)) is dimerization and phosphorylation. Positions 74-163 (IMTTNKRQPS…APPVPKSKIP (90 aa)) are disordered. Residues 75–84 (MTTNKRQPSF) show a composition bias toward polar residues. Residues 95–106 (SIDHHHDDDPKE) show a composition bias toward basic and acidic residues. Ser-173 carries the phosphoserine modification. Residues 213 to 330 (LFRQ…FLKD) and 333 to 451 (VLSS…QGSS) each bind a nucleoside 3',5'-cyclic phosphate. The 3',5'-cyclic AMP site is built by Glu-278, Arg-287, Glu-399, and Arg-408.

This sequence belongs to the cAMP-dependent kinase regulatory chain family. In terms of assembly, tetramer, composed of 2 regulatory (R) and 2 catalytic (C) subunits. In the presence of cAMP it dissociates into 2 active monomeric C subunits and an R dimer.

The polypeptide is cAMP-dependent protein kinase regulatory subunit (PKAR) (Debaryomyces hansenii (strain ATCC 36239 / CBS 767 / BCRC 21394 / JCM 1990 / NBRC 0083 / IGC 2968) (Yeast)).